A 726-amino-acid chain; its full sequence is Peroxisomal bifunctional enzyme (726 aa).

Residues methionine 1–serine 284 form an enoyl-CoA hydratase / isomerase region. At lysine 38 the chain carries N6-succinyllysine. Residue glycine 103 coordinates substrate. N6-acetyllysine; alternate is present on lysine 167. Lysine 167 bears the N6-succinyllysine; alternate mark. Lysine 173 is modified (N6-acetyllysine). Lysine 185 bears the N6-succinyllysine mark. Lysine 221 carries the post-translational modification N6-acetyllysine; alternate. The residue at position 221 (lysine 221) is an N6-succinyllysine; alternate. N6-succinyllysine is present on residues lysine 282, lysine 292, and lysine 333. The 3-hydroxyacyl-CoA dehydrogenase stretch occupies residues threonine 285 to glycine 575. N6-acetyllysine is present on residues lysine 348 and lysine 352. The segment at lysine 352–serine 371 is disordered. Over residues serine 353–serine 371 the composition is skewed to polar residues. Residue lysine 467 is modified to N6-acetyllysine. Lysine 535 carries the N6-succinyllysine modification. N6-acetyllysine; alternate is present on residues lysine 587, lysine 594, and lysine 713. 3 positions are modified to N6-succinyllysine; alternate: lysine 587, lysine 594, and lysine 713. A Microbody targeting signal motif is present at residues serine 724–leucine 726. The residue at position 725 (lysine 725) is an N6-succinyllysine.

This sequence in the N-terminal section; belongs to the enoyl-CoA hydratase/isomerase family. It in the C-terminal section; belongs to the 3-hydroxyacyl-CoA dehydrogenase family. As to quaternary structure, monomer. Post-translationally, acetylated, leading to enhanced enzyme activity. Acetylation is enhanced by up to 80% after treatment either with trichostin A (TSA) or with nicotinamide (NAM) with highest increase on Lys-348. Acetylation and enzyme activity increased by about 1.5% on addition of fatty acids.

The protein resides in the peroxisome. The catalysed reaction is a (3S)-3-hydroxyacyl-CoA = a (2E)-enoyl-CoA + H2O. It carries out the reaction a 4-saturated-(3S)-3-hydroxyacyl-CoA = a (3E)-enoyl-CoA + H2O. The enzyme catalyses a (3Z)-enoyl-CoA = a 4-saturated (2E)-enoyl-CoA. It catalyses the reaction a (3E)-enoyl-CoA = a 4-saturated (2E)-enoyl-CoA. The catalysed reaction is a (3S)-3-hydroxyacyl-CoA + NAD(+) = a 3-oxoacyl-CoA + NADH + H(+). It carries out the reaction (2S,3S)-3-hydroxy-2-methylbutanoyl-CoA = (2E)-2-methylbut-2-enoyl-CoA + H2O. The enzyme catalyses (3S)-hydroxyhexadecanoyl-CoA + NAD(+) = 3-oxohexadecanoyl-CoA + NADH + H(+). It catalyses the reaction (3S)-hydroxyhexadecanoyl-CoA = (2E)-hexadecenoyl-CoA + H2O. The catalysed reaction is (2E)-hexadecenedioyl-CoA + H2O = (3S)-hydroxyhexadecanedioyl-CoA. It carries out the reaction (3S)-hydroxyhexadecanedioyl-CoA + NAD(+) = 3-oxohexadecanedioyl-CoA + NADH + H(+). The enzyme catalyses (3E,5Z)-tetradecadienoyl-CoA = (2E,5Z)-tetradecadienoyl-CoA. It catalyses the reaction (3E,5Z)-octadienoyl-CoA = (2E,5Z)-octadienoyl-CoA. The catalysed reaction is (3S)-hydroxydecanoyl-CoA + NAD(+) = 3-oxodecanoyl-CoA + NADH + H(+). It carries out the reaction (3E)-decenoyl-CoA = (2E)-decenoyl-CoA. The enzyme catalyses (3Z)-hexenoyl-CoA = (2E)-hexenoyl-CoA. It catalyses the reaction (3E)-hexenoyl-CoA = (2E)-hexenoyl-CoA. The catalysed reaction is (3S)-hydroxydecanoyl-CoA = (2E)-decenoyl-CoA + H2O. It carries out the reaction (3S)-hydroxyhexanoyl-CoA = (2E)-hexenoyl-CoA + H2O. Its pathway is lipid metabolism; fatty acid beta-oxidation. Its activity is regulated as follows. Enzyme activity enhanced by acetylation. Functionally, peroxisomal trifunctional enzyme possessing 2-enoyl-CoA hydratase, 3-hydroxyacyl-CoA dehydrogenase, and delta 3, delta 2-enoyl-CoA isomerase activities. Catalyzes two of the four reactions of the long chain fatty acids peroxisomal beta-oxidation pathway. Can also use branched-chain fatty acids such as 2-methyl-2E-butenoyl-CoA as a substrate, which is hydrated into (2S,3S)-3-hydroxy-2-methylbutanoyl-CoA. Optimal isomerase for 2,5 double bonds into 3,5 form isomerization in a range of enoyl-CoA species. Also able to isomerize both 3-cis and 3-trans double bonds into the 2-trans form in a range of enoyl-CoA species. Regulates the amount of medium-chain dicarboxylic fatty acids which are essential regulators of all fatty acid oxidation pathways. Also involved in the degradation of long-chain dicarboxylic acids through peroxisomal beta-oxidation. This chain is Peroxisomal bifunctional enzyme (EHHADH), found in Cavia porcellus (Guinea pig).